The chain runs to 640 residues: MGDNYNSESIQILEGLEAIRKRPGMYIGATNARGLHHLVWEIVDNSIDEVLANFANKIKIILNKDESITVIDNGRGIPIEIHPKTKVSTLETVFTILHAGGKFDSNTYKISGGLHGVGASVVNALSKYLKVEVRKNNKKYVMEFHNGGQILTPIKEVGSTSETGTTVTFLPDEKIFKETTIFSFSTIQNRIKQLVFLNKGLEISLVDLREEDEEKTVLYQFNNGIKDYVLELNKTIGTPLNDVFYVEGIEDNIVVEFGLQYNDNYSENIFSFCNNINTHEGGTHEEGARLAIVREINNYFKNQINKNNKGNEDKFTWDDIKEGMTIIISIRHPEPQYEGQTNQKLLNSEVKKIVSNIVGKGLSSYLLENPEDAKKIIEKISLSLKATIVAQRAKEITRRKIVMDSFSLPGKLSDCETKDAKIAELYIVEGDSAGGSAKSGRNRKFQAILPLRGKILNVEKAKQIKIFENNEINSIITALGAGIKDNFNDKKLRYQKVIIMTDADVDGAHIRILLLTFFYRYMKDLIENGNIYIAQPPLYKVENSNQIRYVYSDNELELYKEELLKQNKNYTIQRYKGLGEMNPEQLWETTMDPERRLLLKVSVNNAFEANLICNELMGENVEPRKKFIRENAKYVKNLDV.

The Toprim domain maps to 423 to 537 (AELYIVEGDS…NGNIYIAQPP (115 aa)). Residues Glu429, Asp502, and Asp504 each coordinate Mg(2+).

The protein belongs to the type II topoisomerase GyrB family. Heterotetramer, composed of two GyrA and two GyrB chains. In the heterotetramer, GyrA contains the active site tyrosine that forms a transient covalent intermediate with DNA, while GyrB binds cofactors and catalyzes ATP hydrolysis. Requires Mg(2+) as cofactor. Mn(2+) is required as a cofactor. It depends on Ca(2+) as a cofactor.

It localises to the cytoplasm. It catalyses the reaction ATP-dependent breakage, passage and rejoining of double-stranded DNA.. Its function is as follows. A type II topoisomerase that negatively supercoils closed circular double-stranded (ds) DNA in an ATP-dependent manner to modulate DNA topology and maintain chromosomes in an underwound state. Negative supercoiling favors strand separation, and DNA replication, transcription, recombination and repair, all of which involve strand separation. Also able to catalyze the interconversion of other topological isomers of dsDNA rings, including catenanes and knotted rings. Type II topoisomerases break and join 2 DNA strands simultaneously in an ATP-dependent manner. The sequence is that of DNA gyrase subunit B from Spiroplasma citri.